Consider the following 456-residue polypeptide: MLNNAMSVVILAAGKGTRMYSDLPKVLHTLAGKAMVQHVIDAANELGAAHVHLVYGHGGDLLKQALKDDNLNWVLQAEQLGTGHAMQQAAPFFADDEDILMLYGDVPLISVETLQRLRDAKPQGGIGLLTVKLDDPTGYGRITRENGKVTGIVEHKDATDEQRQIQEINTGILIANGADMKRWLAKLTNNNAQGEYYITDIIALAYQEGREIVAVHPQRLSEVEGVNNRLQLSRLERVYQSEQAEKLLLAGVMLRDPARFDLRGTLTHGRDVEIDTNVIIEGNVTLGHRVKIGTGCVIKNSVIGDDCEISPYTVVEDANLAAACTIGPFARLRPGAELLEGAHVGNFVEMKKARLGKGSKVGHLTYLGDAEIGDNVNIGAGTITCNYDGANKFKTIIGDDVFVGSDTQLVAPVTVGKGATIAAGTTVTRNVGENALAISRVPQTQKEGWRRPVKKK.

A pyrophosphorylase region spans residues 1-229; it reads MLNNAMSVVI…LSEVEGVNNR (229 aa). UDP-N-acetyl-alpha-D-glucosamine contacts are provided by residues 11-14, Lys25, Gln76, 81-82, 103-105, Gly140, Glu154, Asn169, and Asn227; these read LAAG, GT, and YGD. Asp105 contacts Mg(2+). Residue Asn227 coordinates Mg(2+). A linker region spans residues 230 to 250; the sequence is LQLSRLERVYQSEQAEKLLLA. The N-acetyltransferase stretch occupies residues 251 to 456; it reads GVMLRDPARF…EGWRRPVKKK (206 aa). UDP-N-acetyl-alpha-D-glucosamine is bound by residues Arg333 and Lys351. His363 (proton acceptor) is an active-site residue. UDP-N-acetyl-alpha-D-glucosamine contacts are provided by Tyr366 and Asn377. Residues Ala380, 386 to 387, Ser405, Ala423, and Arg440 contribute to the acetyl-CoA site; that span reads NY.

It in the N-terminal section; belongs to the N-acetylglucosamine-1-phosphate uridyltransferase family. The protein in the C-terminal section; belongs to the transferase hexapeptide repeat family. In terms of assembly, homotrimer. Mg(2+) is required as a cofactor.

The protein resides in the cytoplasm. The enzyme catalyses alpha-D-glucosamine 1-phosphate + acetyl-CoA = N-acetyl-alpha-D-glucosamine 1-phosphate + CoA + H(+). It catalyses the reaction N-acetyl-alpha-D-glucosamine 1-phosphate + UTP + H(+) = UDP-N-acetyl-alpha-D-glucosamine + diphosphate. It functions in the pathway nucleotide-sugar biosynthesis; UDP-N-acetyl-alpha-D-glucosamine biosynthesis; N-acetyl-alpha-D-glucosamine 1-phosphate from alpha-D-glucosamine 6-phosphate (route II): step 2/2. The protein operates within nucleotide-sugar biosynthesis; UDP-N-acetyl-alpha-D-glucosamine biosynthesis; UDP-N-acetyl-alpha-D-glucosamine from N-acetyl-alpha-D-glucosamine 1-phosphate: step 1/1. Its pathway is bacterial outer membrane biogenesis; LPS lipid A biosynthesis. Its function is as follows. Catalyzes the last two sequential reactions in the de novo biosynthetic pathway for UDP-N-acetylglucosamine (UDP-GlcNAc). The C-terminal domain catalyzes the transfer of acetyl group from acetyl coenzyme A to glucosamine-1-phosphate (GlcN-1-P) to produce N-acetylglucosamine-1-phosphate (GlcNAc-1-P), which is converted into UDP-GlcNAc by the transfer of uridine 5-monophosphate (from uridine 5-triphosphate), a reaction catalyzed by the N-terminal domain. This Shigella sonnei (strain Ss046) protein is Bifunctional protein GlmU.